The chain runs to 454 residues: O-phospho-L-seryl-tRNA:Cys-tRNA synthase 2 (454 aa).

Pyridoxal 5'-phosphate-binding positions include 146-147 (AR), Asn251, and 274-276 (SGH). Lys277 bears the N6-(pyridoxal phosphate)lysine mark.

The protein belongs to the SepCysS family. In terms of assembly, homodimer. Interacts with SepRS. Requires pyridoxal 5'-phosphate as cofactor.

The enzyme catalyses O-phospho-L-seryl-tRNA(Cys) + hydrogen sulfide + H(+) = L-cysteinyl-tRNA(Cys) + phosphate. Functionally, converts O-phospho-L-seryl-tRNA(Cys) (Sep-tRNA(Cys)) to L-cysteinyl-tRNA(Cys) (Cys-tRNA(Cys)). This chain is O-phospho-L-seryl-tRNA:Cys-tRNA synthase 2, found in Methanoregula boonei (strain DSM 21154 / JCM 14090 / 6A8).